The primary structure comprises 356 residues: UDP-3-O-acylglucosamine N-acyltransferase (356 aa).

Catalysis depends on H242, which acts as the Proton acceptor.

It belongs to the transferase hexapeptide repeat family. LpxD subfamily. In terms of assembly, homotrimer.

The enzyme catalyses a UDP-3-O-[(3R)-3-hydroxyacyl]-alpha-D-glucosamine + a (3R)-hydroxyacyl-[ACP] = a UDP-2-N,3-O-bis[(3R)-3-hydroxyacyl]-alpha-D-glucosamine + holo-[ACP] + H(+). The protein operates within bacterial outer membrane biogenesis; LPS lipid A biosynthesis. Catalyzes the N-acylation of UDP-3-O-acylglucosamine using 3-hydroxyacyl-ACP as the acyl donor. Is involved in the biosynthesis of lipid A, a phosphorylated glycolipid that anchors the lipopolysaccharide to the outer membrane of the cell. The polypeptide is UDP-3-O-acylglucosamine N-acyltransferase (Acinetobacter baumannii (strain ACICU)).